A 149-amino-acid polypeptide reads, in one-letter code: Large ribosomal subunit protein bL9 (149 aa).

Belongs to the bacterial ribosomal protein bL9 family.

Its function is as follows. Binds to the 23S rRNA. The sequence is that of Large ribosomal subunit protein bL9 from Helicobacter pylori (strain ATCC 700392 / 26695) (Campylobacter pylori).